The chain runs to 202 residues: MLELLKVSITGDLSSGKTEACRVFQELGAYVISADKVSHSFLVPHSHIGRRVIDLLGPEVVIDNTFDRKVIAEKVFGNLDLLQALEAILHPEVCRIIEEQYCQVAKERKYPLFIAEVPLLYEIHYARWFDRVILITADENIRRERFTKKTNCSDLNFYQRCARFSSHEEKMMHADIVIENNGTKEELRHKVEEYFYALKGAL.

Positions 6-202 constitute a DPCK domain; the sequence is KVSITGDLSS…EYFYALKGAL (197 aa). An ATP-binding site is contributed by 14–19; it reads SSGKTE.

It belongs to the CoaE family.

The protein resides in the cytoplasm. The catalysed reaction is 3'-dephospho-CoA + ATP = ADP + CoA + H(+). It participates in cofactor biosynthesis; coenzyme A biosynthesis; CoA from (R)-pantothenate: step 5/5. Catalyzes the phosphorylation of the 3'-hydroxyl group of dephosphocoenzyme A to form coenzyme A. This Chlamydia abortus (strain DSM 27085 / S26/3) (Chlamydophila abortus) protein is Dephospho-CoA kinase.